The primary structure comprises 526 residues: Fusicoccadiene 8-ol C-16-hydroxylase (526 aa).

A helical transmembrane segment spans residues 34-56; sequence AFVGFSVLGLTLLFSKLFYNAYL. N-linked (GlcNAc...) asparagine glycans are attached at residues Asn-309, Asn-418, and Asn-434. Residue Cys-470 participates in heme binding.

This sequence belongs to the cytochrome P450 family. The cofactor is heme.

It is found in the membrane. It participates in mycotoxin biosynthesis. In terms of biological role, cytochrome P450 monooxygenase; part of the 2 gene clusters that mediate the biosynthesis of fusicoccins, diterpene glucosides that display phytohormone-like activity and function as potent activators of plasma membrane H(+)-ATPases in plants by modifying 14-3-3 proteins and cause the plant disease constriction canker. The first step in the pathway is performed by the fusicoccadiene synthase PaFS that possesses both prenyl transferase and terpene cyclase activity, converting isopentenyl diphosphate and dimethylallyl diphosphate into geranylgeranyl diphosphate (GGDP) and successively converting GGDP into fusicocca-2,10(14)-diene, a precursor for fusicoccin H. The second step is the oxidation at the C-8 position by the cytochrome P450 monooxygenase PaP450-2 to yield fusicocca-2,10(14)-diene-8-beta-ol. The cytochrome P450 monooxygenase PaP450-1 then catalyzes the hydroxylation at the C-16 position to produce fusicocca-2,10(14)-diene-8-beta,16-diol. The dioxygenase fc-dox then catalyzes the 16-oxydation of fusicocca-2,10(14)-diene-8-beta,16-diol to yield an aldehyde (8-beta-hydroxyfusicocca-1,10(14)-dien-16-al). The short-chain dehydrogenase/reductase fc-sdr catalyzes the reduction of the aldehyde to yield fusicocca-1,10(14)-diene-8-beta,16-diol. The next step is the hydroxylation at C-9 performed by the cytochrome P450 monooxygenase PaP450-3 that leads to fusicoccin H aglycon which is glycosylated to fusicoccin H by the O-glycosyltransferase PaGT. Hydroxylation at C-12 by the cytochrome P450 monooxygenase PaP450-4 leads then to the production of fusicoccin Q and is followed by methylation by the O-methyltransferase PaMT to yield fusicoccin P. Fusicoccin P is further converted to fusicoccin J via prenylation by the O-glucose prenyltransferase PaPT. Cytochrome P450 monooxygenase PaP450-5 then performs hydroxylation at C-19 to yield dideacetyl-fusicoccin A which is acetylated to 3'-O-deacetyl-fusicoccin A by the O-acetyltransferase PaAT-2. Finally, a another acetylation by the O-acetyltransferase PaAT-1 yields fusicoccin A. The chain is Fusicoccadiene 8-ol C-16-hydroxylase from Phomopsis amygdali (Fusicoccum amygdali).